The chain runs to 119 residues: Large ribosomal subunit protein bL20 (119 aa).

The protein belongs to the bacterial ribosomal protein bL20 family.

Its function is as follows. Binds directly to 23S ribosomal RNA and is necessary for the in vitro assembly process of the 50S ribosomal subunit. It is not involved in the protein synthesizing functions of that subunit. In Streptococcus thermophilus (strain ATCC BAA-491 / LMD-9), this protein is Large ribosomal subunit protein bL20.